Here is a 259-residue protein sequence, read N- to C-terminus: Putative cysteine-rich repeat secretory protein 25 (259 aa).

Residues 1-31 (MSSSFLSRPLVSVYVFAMVTMQLLFMQSVLS) form the signal peptide. Gnk2-homologous domains follow at residues 37–138 (AYLN…SIYT) and 144–256 (YRHI…LYPF).

The protein belongs to the cysteine-rich repeat secretory protein family.

Its subcellular location is the secreted. The sequence is that of Putative cysteine-rich repeat secretory protein 25 (CRRSP25) from Arabidopsis thaliana (Mouse-ear cress).